The sequence spans 470 residues: 3-isopropylmalate dehydratase large subunit (470 aa).

[4Fe-4S] cluster is bound by residues C349, C410, and C413.

The protein belongs to the aconitase/IPM isomerase family. LeuC type 1 subfamily. As to quaternary structure, heterodimer of LeuC and LeuD. It depends on [4Fe-4S] cluster as a cofactor.

It carries out the reaction (2R,3S)-3-isopropylmalate = (2S)-2-isopropylmalate. The protein operates within amino-acid biosynthesis; L-leucine biosynthesis; L-leucine from 3-methyl-2-oxobutanoate: step 2/4. Functionally, catalyzes the isomerization between 2-isopropylmalate and 3-isopropylmalate, via the formation of 2-isopropylmaleate. In Nitrosomonas europaea (strain ATCC 19718 / CIP 103999 / KCTC 2705 / NBRC 14298), this protein is 3-isopropylmalate dehydratase large subunit.